The sequence spans 543 residues: Probable protein kinase UbiB (543 aa).

In terms of domain architecture, Protein kinase spans 123-501; that stretch reads DFDSQALASA…GSRQGRARYL (379 aa). ATP is bound by residues 129 to 137 and lysine 152; that span reads LASASIAQV. Aspartate 287 acts as the Proton acceptor in catalysis. Residues 517–537 form a helical membrane-spanning segment; that stretch reads MVNIALWPIGLYVAGGVIWLA.

This sequence belongs to the ABC1 family. UbiB subfamily.

It is found in the cell inner membrane. It participates in cofactor biosynthesis; ubiquinone biosynthesis [regulation]. In terms of biological role, is probably a protein kinase regulator of UbiI activity which is involved in aerobic coenzyme Q (ubiquinone) biosynthesis. This is Probable protein kinase UbiB from Edwardsiella ictaluri (strain 93-146).